We begin with the raw amino-acid sequence, 279 residues long: Putative pyruvate, phosphate dikinase regulatory protein (279 aa).

An ADP-binding site is contributed by 153-160; sequence GVSRTSKT.

This sequence belongs to the pyruvate, phosphate/water dikinase regulatory protein family. PDRP subfamily.

The catalysed reaction is N(tele)-phospho-L-histidyl/L-threonyl-[pyruvate, phosphate dikinase] + ADP = N(tele)-phospho-L-histidyl/O-phospho-L-threonyl-[pyruvate, phosphate dikinase] + AMP + H(+). It catalyses the reaction N(tele)-phospho-L-histidyl/O-phospho-L-threonyl-[pyruvate, phosphate dikinase] + phosphate + H(+) = N(tele)-phospho-L-histidyl/L-threonyl-[pyruvate, phosphate dikinase] + diphosphate. Bifunctional serine/threonine kinase and phosphorylase involved in the regulation of the pyruvate, phosphate dikinase (PPDK) by catalyzing its phosphorylation/dephosphorylation. The protein is Putative pyruvate, phosphate dikinase regulatory protein of Rhodopseudomonas palustris (strain BisA53).